A 308-amino-acid chain; its full sequence is Heme A synthase (308 aa).

The Cytoplasmic portion of the chain corresponds to 1–8 (MFKKRNLK). A helical transmembrane segment spans residues 9 to 29 (WLSILATVIMAWVQLGGALVT). At 30–67 (KTGSENGCGASWPLCHGALLPQNLPIATIIELSHRATS) the chain is on the extracellular side. Cys-37 and Cys-44 are disulfide-bonded. Residue Glu-60 is part of the active site. His-63 provides a ligand contact to heme o. Residues 68 to 88 (ALSLIVVLWLVITAWKNIGYI) traverse the membrane as a helical segment. At 89 to 93 (KEVKP) the chain is on the cytoplasmic side. A helical transmembrane segment spans residues 94 to 114 (LCIISVAFLLIQALVGAAAVL). At 115–123 (WQQNDYVLA) the chain is on the extracellular side. Residues 124–144 (LHFGISLISFSSVFVLTLIIF) form a helical membrane-spanning segment. Residue His-125 participates in heme o binding. The Cytoplasmic segment spans residues 145-161 (DVDQKYEANKVHIDRKL). A helical membrane pass occupies residues 162-182 (RIYTWTMAICLYVGIYTGALV). The Extracellular segment spans residues 183–215 (RHTKSSLAYGSWPLPFNDLIPHTEQDWVQLAHR). His-214 provides a ligand contact to heme b. Residues 216–236 (TLALIASISVFLAFNYAIKHY) traverse the membrane as a helical segment. Topologically, residues 237–244 (QNNRTIRY) are cytoplasmic. Residues 245–265 (GYTAALLLIILQIVTGALSIF) traverse the membrane as a helical segment. The Extracellular portion of the chain corresponds to 266–270 (THVNL). A helical transmembrane segment spans residues 271–291 (IIALLHALIITFEFGLIAYLI). Residue His-276 coordinates heme b. Residues 292 to 308 (VLLLRSQRVEKVKQNAY) are Cytoplasmic-facing.

Belongs to the COX15/CtaA family. Type 1 subfamily. In terms of assembly, interacts with CtaB. Heme b is required as a cofactor.

It localises to the cell membrane. The catalysed reaction is Fe(II)-heme o + 2 A + H2O = Fe(II)-heme a + 2 AH2. It participates in porphyrin-containing compound metabolism; heme A biosynthesis; heme A from heme O: step 1/1. Catalyzes the conversion of heme O to heme A by two successive hydroxylations of the methyl group at C8. The first hydroxylation forms heme I, the second hydroxylation results in an unstable dihydroxymethyl group, which spontaneously dehydrates, resulting in the formyl group of heme A. The sequence is that of Heme A synthase from Staphylococcus carnosus (strain TM300).